A 51-amino-acid chain; its full sequence is Ribosome biogenesis protein Nop10 (51 aa).

The protein belongs to the NOP10 family.

Its function is as follows. Involved in ribosome biogenesis; more specifically in 18S rRNA pseudouridylation and in cleavage of pre-rRNA. This is Ribosome biogenesis protein Nop10 from Methanococcus aeolicus (strain ATCC BAA-1280 / DSM 17508 / OCM 812 / Nankai-3).